A 215-amino-acid polypeptide reads, in one-letter code: Ankyrin repeat domain-containing protein 49 (215 aa).

ANK repeat units follow at residues 81–110 (DGYTPLHRAAYNNFVDMAKLLLQYHANPNA) and 114–143 (LGWTPLHSACKWNNADCAHLLLQFGADVNA).

As to quaternary structure, interacts with Bdbt; interaction promotes the stability of both complex members.

The protein resides in the cytoplasm. Its subcellular location is the cytosol. The protein localises to the cell membrane. In terms of biological role, required for regulating the establishment of planar cell polarity in the wing. Forms a complex with Bdbt which likely functions in the regulation of planar polarity by promoting the activity of Dco during planar polarity establishment. Within the complex, probably functions to stabilize Bdbt, while Bdbt directly promotes Dco activity in regulating phosphorylation of core proteins such as dsh, and asymmetric localization. This chain is Ankyrin repeat domain-containing protein 49, found in Drosophila melanogaster (Fruit fly).